The chain runs to 232 residues: 7-cyano-7-deazaguanine synthase (232 aa).

8 to 18 contributes to the ATP binding site; sequence LSGGLDSATVL. Positions 188, 198, 201, and 204 each coordinate Zn(2+).

It belongs to the QueC family. Requires Zn(2+) as cofactor.

The enzyme catalyses 7-carboxy-7-deazaguanine + NH4(+) + ATP = 7-cyano-7-deazaguanine + ADP + phosphate + H2O + H(+). It functions in the pathway purine metabolism; 7-cyano-7-deazaguanine biosynthesis. Catalyzes the ATP-dependent conversion of 7-carboxy-7-deazaguanine (CDG) to 7-cyano-7-deazaguanine (preQ(0)). The polypeptide is 7-cyano-7-deazaguanine synthase (Nitrosospira multiformis (strain ATCC 25196 / NCIMB 11849 / C 71)).